A 304-amino-acid chain; its full sequence is UDP-N-acetylenolpyruvoylglucosamine reductase (304 aa).

The region spanning 33 to 198 is the FAD-binding PCMH-type domain; that stretch reads RVGGPADILV…IEATVELESG (166 aa). R177 is a catalytic residue. Catalysis depends on S227, which acts as the Proton donor. E297 is a catalytic residue.

It belongs to the MurB family. FAD is required as a cofactor.

The protein localises to the cytoplasm. It carries out the reaction UDP-N-acetyl-alpha-D-muramate + NADP(+) = UDP-N-acetyl-3-O-(1-carboxyvinyl)-alpha-D-glucosamine + NADPH + H(+). Its pathway is cell wall biogenesis; peptidoglycan biosynthesis. Functionally, cell wall formation. This Clostridium perfringens (strain ATCC 13124 / DSM 756 / JCM 1290 / NCIMB 6125 / NCTC 8237 / Type A) protein is UDP-N-acetylenolpyruvoylglucosamine reductase.